Consider the following 363-residue polypeptide: Flagellar P-ring protein (363 aa).

An N-terminal signal peptide occupies residues 1–20; it reads MKIKVLLAVALLAMTVPVKA.

This sequence belongs to the FlgI family. In terms of assembly, the basal body constitutes a major portion of the flagellar organelle and consists of four rings (L,P,S, and M) mounted on a central rod.

The protein resides in the periplasm. It localises to the bacterial flagellum basal body. Assembles around the rod to form the L-ring and probably protects the motor/basal body from shearing forces during rotation. This chain is Flagellar P-ring protein, found in Shewanella amazonensis (strain ATCC BAA-1098 / SB2B).